The sequence spans 317 residues: Pantothenate kinase (317 aa).

ATP is bound at residue 95–102 (GSVAVGKS).

The protein belongs to the prokaryotic pantothenate kinase family.

It is found in the cytoplasm. The catalysed reaction is (R)-pantothenate + ATP = (R)-4'-phosphopantothenate + ADP + H(+). The protein operates within cofactor biosynthesis; coenzyme A biosynthesis; CoA from (R)-pantothenate: step 1/5. The protein is Pantothenate kinase of Myxococcus xanthus (strain DK1622).